Here is a 174-residue protein sequence, read N- to C-terminus: UPF0316 protein LMHCC_0787 (174 aa).

Transmembrane regions (helical) follow at residues 4–24 (GIFIVATIFVVNILYVTIYTV), 36–56 (LAALSSVFEMIIYVVALSLVL), and 62–82 (IANVLAYAIGFGVGIIVGMKI).

This sequence belongs to the UPF0316 family.

It is found in the cell membrane. The protein is UPF0316 protein LMHCC_0787 of Listeria monocytogenes serotype 4a (strain HCC23).